We begin with the raw amino-acid sequence, 155 residues long: MSKTNKRKIEKARIEAKILGFLESGRKEITSKKQLEKYAIGSLISYKNTNDEFKQGGFITKFADEYFIYITPDFTTKYRVKYKNVKTMWVGNVYKTKNDLVSLVETPQEPTNFEVTLNGITIYYAKNSFDVRRYKSTEKYKRMNAWCDYFKNPKK.

Belongs to the mimivirus L6/L7/L57 family.

This is an uncharacterized protein from Acanthamoeba polyphaga (Amoeba).